Consider the following 200-residue polypeptide: ATP-dependent Clp protease proteolytic subunit (200 aa).

Ser96 (nucleophile) is an active-site residue. His121 is an active-site residue.

It belongs to the peptidase S14 family. In terms of assembly, fourteen ClpP subunits assemble into 2 heptameric rings which stack back to back to give a disk-like structure with a central cavity, resembling the structure of eukaryotic proteasomes.

Its subcellular location is the cytoplasm. The catalysed reaction is Hydrolysis of proteins to small peptides in the presence of ATP and magnesium. alpha-casein is the usual test substrate. In the absence of ATP, only oligopeptides shorter than five residues are hydrolyzed (such as succinyl-Leu-Tyr-|-NHMec, and Leu-Tyr-Leu-|-Tyr-Trp, in which cleavage of the -Tyr-|-Leu- and -Tyr-|-Trp bonds also occurs).. Functionally, cleaves peptides in various proteins in a process that requires ATP hydrolysis. Has a chymotrypsin-like activity. Plays a major role in the degradation of misfolded proteins. In Leuconostoc citreum (strain KM20), this protein is ATP-dependent Clp protease proteolytic subunit.